The chain runs to 101 residues: Large ribosomal subunit protein uL24 (101 aa).

This sequence belongs to the universal ribosomal protein uL24 family. Part of the 50S ribosomal subunit.

In terms of biological role, one of two assembly initiator proteins, it binds directly to the 5'-end of the 23S rRNA, where it nucleates assembly of the 50S subunit. Its function is as follows. One of the proteins that surrounds the polypeptide exit tunnel on the outside of the subunit. In Cereibacter sphaeroides (strain ATCC 17025 / ATH 2.4.3) (Rhodobacter sphaeroides), this protein is Large ribosomal subunit protein uL24.